The chain runs to 335 residues: Glycerol-3-phosphate dehydrogenase [NAD(P)+] (335 aa).

Residues Ser-12, Trp-13, and Lys-107 each contribute to the NADPH site. Sn-glycerol 3-phosphate-binding residues include Lys-107, Gly-138, and Ser-140. Ala-142 contacts NADPH. Lys-193, Asp-246, Ser-256, Arg-257, and Asn-258 together coordinate sn-glycerol 3-phosphate. Catalysis depends on Lys-193, which acts as the Proton acceptor. Residue Arg-257 coordinates NADPH. The NADPH site is built by Val-281 and Glu-283.

The protein belongs to the NAD-dependent glycerol-3-phosphate dehydrogenase family.

The protein localises to the cytoplasm. The catalysed reaction is sn-glycerol 3-phosphate + NAD(+) = dihydroxyacetone phosphate + NADH + H(+). The enzyme catalyses sn-glycerol 3-phosphate + NADP(+) = dihydroxyacetone phosphate + NADPH + H(+). Its pathway is membrane lipid metabolism; glycerophospholipid metabolism. In terms of biological role, catalyzes the reduction of the glycolytic intermediate dihydroxyacetone phosphate (DHAP) to sn-glycerol 3-phosphate (G3P), the key precursor for phospholipid synthesis. The polypeptide is Glycerol-3-phosphate dehydrogenase [NAD(P)+] (Geobacter metallireducens (strain ATCC 53774 / DSM 7210 / GS-15)).